A 201-amino-acid polypeptide reads, in one-letter code: 3-isopropylmalate dehydratase small subunit (201 aa).

The protein belongs to the LeuD family. LeuD type 1 subfamily. Heterodimer of LeuC and LeuD.

The enzyme catalyses (2R,3S)-3-isopropylmalate = (2S)-2-isopropylmalate. Its pathway is amino-acid biosynthesis; L-leucine biosynthesis; L-leucine from 3-methyl-2-oxobutanoate: step 2/4. Functionally, catalyzes the isomerization between 2-isopropylmalate and 3-isopropylmalate, via the formation of 2-isopropylmaleate. In Shigella flexneri serotype 5b (strain 8401), this protein is 3-isopropylmalate dehydratase small subunit.